A 269-amino-acid chain; its full sequence is 5'-nucleotidase SurE (269 aa).

4 residues coordinate a divalent metal cation: aspartate 11, aspartate 12, serine 43, and asparagine 101.

This sequence belongs to the SurE nucleotidase family. Requires a divalent metal cation as cofactor.

It localises to the cytoplasm. It carries out the reaction a ribonucleoside 5'-phosphate + H2O = a ribonucleoside + phosphate. In terms of biological role, nucleotidase that shows phosphatase activity on nucleoside 5'-monophosphates. The polypeptide is 5'-nucleotidase SurE (Synechococcus sp. (strain CC9605)).